The sequence spans 695 residues: Cysteine-rich receptor-like protein kinase 6 (695 aa).

The N-terminal stretch at 1–31 (MRRHRPYLDGVAAAAATFLLAVLLHAPLAAG) is a signal peptide. The Extracellular segment spans residues 32 to 294 (EDEPPPWVLC…ATSGEKTKNR (263 aa)). Gnk2-homologous domains follow at residues 38-142 (WVLC…NRDF) and 151-261 (TTYT…VFPF). 4 N-linked (GlcNAc...) asparagine glycosylation sites follow: Asn49, Asn53, Asn70, and Asn101. 2 disulfides stabilise this stretch: Cys96-Cys105 and Cys108-Cys133. A glycan (N-linked (GlcNAc...) asparagine) is linked at Asn178. 2 cysteine pairs are disulfide-bonded: Cys215–Cys224 and Cys227–Cys252. The helical transmembrane segment at 295–315 (IGTVLAIVMPAIAAILLMVVA) threads the bilayer. Residues 316–695 (CFCCWKRIKK…DLSITELVPR (380 aa)) lie on the Cytoplasmic side of the membrane. Residues 363–634 (FADTKMIGQG…PTISSVNIML (272 aa)) enclose the Protein kinase domain. Residues 369–377 (IGQGGFGMV) and Lys391 each bind ATP. Asp488 functions as the Proton acceptor in the catalytic mechanism. A disordered region spans residues 658–682 (DSSNPYSERYPRPRHSGYSDNSTVV).

This sequence belongs to the protein kinase superfamily. Ser/Thr protein kinase family. CRK subfamily.

The protein localises to the membrane. Involved in disease resistance. Required for NPR1/NH1-mediated immunity to the bacterial blight pathogen Xanthomomas oryzae pv. oryzae (Xoo). Required for the benzothiadiazole (BTH)-induced immune response. Possesses kinase activity in vitro. The protein is Cysteine-rich receptor-like protein kinase 6 of Oryza sativa subsp. japonica (Rice).